The sequence spans 454 residues: NADP-specific glutamate dehydrogenase (454 aa).

S2 is modified (N-acetylserine). K114 is a catalytic residue.

It belongs to the Glu/Leu/Phe/Val dehydrogenases family. In terms of assembly, homohexamer.

It catalyses the reaction L-glutamate + NADP(+) + H2O = 2-oxoglutarate + NH4(+) + NADPH + H(+). This Neurospora sitophila (Chrysonilia sitophila) protein is NADP-specific glutamate dehydrogenase (GDH).